We begin with the raw amino-acid sequence, 206 residues long: Ribosomal RNA large subunit methyltransferase E (206 aa).

S-adenosyl-L-methionine-binding residues include Gly60, Trp62, Asp80, Asp96, and Asp121. The active-site Proton acceptor is the Lys161.

It belongs to the class I-like SAM-binding methyltransferase superfamily. RNA methyltransferase RlmE family.

Its subcellular location is the cytoplasm. The enzyme catalyses uridine(2552) in 23S rRNA + S-adenosyl-L-methionine = 2'-O-methyluridine(2552) in 23S rRNA + S-adenosyl-L-homocysteine + H(+). Its function is as follows. Specifically methylates the uridine in position 2552 of 23S rRNA at the 2'-O position of the ribose in the fully assembled 50S ribosomal subunit. This is Ribosomal RNA large subunit methyltransferase E from Francisella tularensis subsp. tularensis (strain FSC 198).